A 1106-amino-acid polypeptide reads, in one-letter code: Carbamoyl phosphate synthase large chain (1106 aa).

Residues 1 to 401 (MPKRNDLNKV…AFLKALRSLE (401 aa)) form a carboxyphosphate synthetic domain region. Positions 129, 169, 175, 176, 208, 210, 215, 241, 242, 243, 284, and 298 each coordinate ATP. An ATP-grasp 1 domain is found at 133–327 (KTTMNDIGEP…IARVASKIAI (195 aa)). Residues Gln284, Glu298, and Asn300 each coordinate Mg(2+). Mn(2+) contacts are provided by Gln284, Glu298, and Asn300. An oligomerization domain region spans residues 402–577 (IDLDDLHQSI…YSAYNEENEA (176 aa)). Residues 578–964 (IPPSEPTHDK…ALYKAMLASG (387 aa)) are carbamoyl phosphate synthetic domain. The region spanning 706 to 896 (DQLLNKLGID…MVKIATKAMM (191 aa)) is the ATP-grasp 2 domain. The ATP site is built by Arg742, Gln781, Leu783, Glu787, Gly812, Val813, His814, Ser815, Gln855, and Glu867. Positions 855, 867, and 869 each coordinate Mg(2+). 3 residues coordinate Mn(2+): Gln855, Glu867, and Asn869. The MGS-like domain occupies 965–1106 (FSINLNGGVL…LQDYLKELSN (142 aa)). The segment at 965–1106 (FSINLNGGVL…LQDYLKELSN (142 aa)) is allosteric domain.

Belongs to the CarB family. As to quaternary structure, composed of two chains; the small (or glutamine) chain promotes the hydrolysis of glutamine to ammonia, which is used by the large (or ammonia) chain to synthesize carbamoyl phosphate. Tetramer of heterodimers (alpha,beta)4. Mg(2+) serves as cofactor. Mn(2+) is required as a cofactor.

The catalysed reaction is hydrogencarbonate + L-glutamine + 2 ATP + H2O = carbamoyl phosphate + L-glutamate + 2 ADP + phosphate + 2 H(+). It carries out the reaction hydrogencarbonate + NH4(+) + 2 ATP = carbamoyl phosphate + 2 ADP + phosphate + 2 H(+). Its pathway is amino-acid biosynthesis; L-arginine biosynthesis; carbamoyl phosphate from bicarbonate: step 1/1. The protein operates within pyrimidine metabolism; UMP biosynthesis via de novo pathway; (S)-dihydroorotate from bicarbonate: step 1/3. Its function is as follows. Large subunit of the glutamine-dependent carbamoyl phosphate synthetase (CPSase). CPSase catalyzes the formation of carbamoyl phosphate from the ammonia moiety of glutamine, carbonate, and phosphate donated by ATP, constituting the first step of 2 biosynthetic pathways, one leading to arginine and/or urea and the other to pyrimidine nucleotides. The large subunit (synthetase) binds the substrates ammonia (free or transferred from glutamine from the small subunit), hydrogencarbonate and ATP and carries out an ATP-coupled ligase reaction, activating hydrogencarbonate by forming carboxy phosphate which reacts with ammonia to form carbamoyl phosphate. This is Carbamoyl phosphate synthase large chain from Natranaerobius thermophilus (strain ATCC BAA-1301 / DSM 18059 / JW/NM-WN-LF).